A 378-amino-acid chain; its full sequence is UDP-N-acetylglucosamine--N-acetylmuramyl-(pentapeptide) pyrophosphoryl-undecaprenol N-acetylglucosamine transferase (378 aa).

UDP-N-acetyl-alpha-D-glucosamine contacts are provided by residues 14 to 16 (TGG), asparagine 125, arginine 165, serine 193, and glutamine 293.

This sequence belongs to the glycosyltransferase 28 family. MurG subfamily.

Its subcellular location is the cell inner membrane. It catalyses the reaction di-trans,octa-cis-undecaprenyl diphospho-N-acetyl-alpha-D-muramoyl-L-alanyl-D-glutamyl-meso-2,6-diaminopimeloyl-D-alanyl-D-alanine + UDP-N-acetyl-alpha-D-glucosamine = di-trans,octa-cis-undecaprenyl diphospho-[N-acetyl-alpha-D-glucosaminyl-(1-&gt;4)]-N-acetyl-alpha-D-muramoyl-L-alanyl-D-glutamyl-meso-2,6-diaminopimeloyl-D-alanyl-D-alanine + UDP + H(+). Its pathway is cell wall biogenesis; peptidoglycan biosynthesis. In terms of biological role, cell wall formation. Catalyzes the transfer of a GlcNAc subunit on undecaprenyl-pyrophosphoryl-MurNAc-pentapeptide (lipid intermediate I) to form undecaprenyl-pyrophosphoryl-MurNAc-(pentapeptide)GlcNAc (lipid intermediate II). The chain is UDP-N-acetylglucosamine--N-acetylmuramyl-(pentapeptide) pyrophosphoryl-undecaprenol N-acetylglucosamine transferase from Bartonella bacilliformis (strain ATCC 35685 / KC583 / Herrer 020/F12,63).